Reading from the N-terminus, the 145-residue chain is MVKKVLLINGPNLNLLGTREPEKYGTTTLKDIEMEAHQQVAKHQDAELFTYQNNTEGFIIDRIQEAKQQGVGFIIINAGAYTHTSVGIRDALLGTAIPFIEVHITNVHQREPFRHHSYLSDKAIAVIAGLGVYGYTAAIEYALNY.

Catalysis depends on Tyr-24, which acts as the Proton acceptor. Residues Asn-77, His-83, and Asp-90 each contribute to the substrate site. His-103 (proton donor) is an active-site residue. Residues 104–105 and Arg-114 each bind substrate; that span reads IT.

It belongs to the type-II 3-dehydroquinase family. As to quaternary structure, homododecamer. Adopts a ring-like structure, composed of an arrangement of two hexameric rings stacked on top of one another.

The enzyme catalyses 3-dehydroquinate = 3-dehydroshikimate + H2O. It functions in the pathway aromatic compound metabolism; 3,4-dihydroxybenzoate biosynthesis; 3,4-dihydroxybenzoate from 3-dehydroquinate: step 1/2. Its function is as follows. Is involved in the catabolism of quinate. Allows the utilization of quinate as carbon source via the beta-ketoadipate pathway. This chain is Catabolic 3-dehydroquinase, found in Clavispora lusitaniae (strain ATCC 42720) (Yeast).